The chain runs to 484 residues: Malonate-semialdehyde dehydrogenase 2 (484 aa).

NAD(+)-binding residues include Phe-153, Lys-177, Glu-180, Arg-181, Ser-230, and Thr-252. The active-site Nucleophile is the Cys-285. Glu-385 contributes to the NAD(+) binding site.

Belongs to the aldehyde dehydrogenase family. IolA subfamily. Homotetramer.

The catalysed reaction is 3-oxopropanoate + NAD(+) + CoA + H2O = hydrogencarbonate + acetyl-CoA + NADH + H(+). The enzyme catalyses 2-methyl-3-oxopropanoate + NAD(+) + CoA + H2O = propanoyl-CoA + hydrogencarbonate + NADH + H(+). It participates in polyol metabolism; myo-inositol degradation into acetyl-CoA; acetyl-CoA from myo-inositol: step 7/7. Catalyzes the oxidation of malonate semialdehyde (MSA) and methylmalonate semialdehyde (MMSA) into acetyl-CoA and propanoyl-CoA, respectively. Is involved in a myo-inositol catabolic pathway. Bicarbonate, and not CO2, is the end-product of the enzymatic reaction. The sequence is that of Malonate-semialdehyde dehydrogenase 2 from Geobacillus kaustophilus (strain HTA426).